Consider the following 271-residue polypeptide: Phosphatidylinositol transfer protein beta isoform (271 aa).

K215 carries the post-translational modification N6-acetyllysine. The residue at position 262 (S262) is a Phosphoserine; by PKC.

This sequence belongs to the PtdIns transfer protein family. PI transfer class I subfamily. Post-translationally, constitutive phosphorylation of Ser-262 has no effect on phospholipid transfer activity but is required for Golgi targeting.

Its subcellular location is the golgi apparatus. The protein resides in the golgi apparatus membrane. It is found in the endoplasmic reticulum membrane. It catalyses the reaction a 1,2-diacyl-sn-glycero-3-phosphocholine(in) = a 1,2-diacyl-sn-glycero-3-phosphocholine(out). It carries out the reaction a 1,2-diacyl-sn-glycero-3-phospho-(1D-myo-inositol)(in) = a 1,2-diacyl-sn-glycero-3-phospho-(1D-myo-inositol)(out). The catalysed reaction is an N-(acyl)-sphingosylphosphocholine(in) = an N-(acyl)-sphingosylphosphocholine(out). In terms of biological role, catalyzes the transfer of phosphatidylinositol, phosphatidylcholine and sphingomyelin between membranes. Required for COPI-mediated retrograde transport from the Golgi to the endoplasmic reticulum; phosphatidylinositol and phosphatidylcholine transfer activity is essential for this function. The polypeptide is Phosphatidylinositol transfer protein beta isoform (Pitpnb) (Mus musculus (Mouse)).